Reading from the N-terminus, the 412-residue chain is Aspartate kinase Ask_LysC (412 aa).

One can recognise an ACT domain in the interval 265-332 (LTIRGVPDTP…QGIAAEMGAR (68 aa)).

This sequence belongs to the aspartokinase family.

The protein resides in the cytoplasm. The enzyme catalyses L-aspartate + ATP = 4-phospho-L-aspartate + ADP. It functions in the pathway amino-acid biosynthesis; L-lysine biosynthesis via DAP pathway; (S)-tetrahydrodipicolinate from L-aspartate: step 1/4. It participates in amino-acid biosynthesis; L-methionine biosynthesis via de novo pathway; L-homoserine from L-aspartate: step 1/3. Its pathway is amino-acid biosynthesis; L-threonine biosynthesis; L-threonine from L-aspartate: step 1/5. Allosterically and strongly feedback inhibited by tryptophan. Addition of lysine alone slightly enhances activity. The simultaneous addition of lysine and tryptophan leads to very strong feedback inhibition of the enzyme. The feedback control by tryptophan is reduced in the presence of the compatible solutes hydroxyectoine or ectoine. Functionally, involved in the biosynthesis of L-aspartate-beta-semialdehyde which is a central intermediate in the biosynthesis of different amino acids (L-lysine, L-methionine, L-threonine). Catalyzes the phosphorylation of the beta-carboxyl group of L-aspartate to yield 4-phospho-L-aspartate. The polypeptide is Aspartate kinase Ask_LysC (lysC) (Stutzerimonas stutzeri (strain A1501) (Pseudomonas stutzeri)).